Consider the following 156-residue polypeptide: Small ribosomal subunit protein uS7c (156 aa).

The protein belongs to the universal ribosomal protein uS7 family. As to quaternary structure, part of the 30S ribosomal subunit.

It is found in the plastid. The protein resides in the chloroplast. In terms of biological role, one of the primary rRNA binding proteins, it binds directly to 16S rRNA where it nucleates assembly of the head domain of the 30S subunit. The sequence is that of Small ribosomal subunit protein uS7c (rps7) from Porphyra purpurea (Red seaweed).